A 306-amino-acid polypeptide reads, in one-letter code: MPIKIPDDLPATSVLEAEGVMVMREADAVRQDIRPLRIGLLNLMPNKVTTETQIARLLGATPLQVELTLVRMTNHVARHTPADHMLSFYCPWEEVNDQRFDGFVITGAPVERLPFEEVTYWDEMRRVFDWTQSHVHRTLNICWAAQAAVYHFHGMKKYDLPAKASGVFRQRSLVLASPYLRGFSDDFAIPVSRWTEVRKSDIPADSGLKVLVDSTETGLCLLDDPRHRSLHMFNHVEYDTTSLADEYFRDIQVQPEAKVPVNYFPGDDAKRPPENRWRSHAHLLFGNWINEMYQSTPYDIERIGKV.

Cys142 acts as the Acyl-thioester intermediate in catalysis. 2 residues coordinate substrate: Lys163 and Ser192. Residue His235 is the Proton acceptor of the active site. The active site involves Glu237. Arg249 contributes to the substrate binding site.

This sequence belongs to the MetA family.

It localises to the cytoplasm. It carries out the reaction L-homoserine + acetyl-CoA = O-acetyl-L-homoserine + CoA. The protein operates within amino-acid biosynthesis; L-methionine biosynthesis via de novo pathway; O-acetyl-L-homoserine from L-homoserine: step 1/1. Functionally, transfers an acetyl group from acetyl-CoA to L-homoserine, forming acetyl-L-homoserine. In Brucella melitensis biotype 1 (strain ATCC 23456 / CCUG 17765 / NCTC 10094 / 16M), this protein is Homoserine O-acetyltransferase.